The sequence spans 164 residues: Rhomboid-related protein 1 (164 aa).

A run of 4 helical transmembrane segments spans residues 10–30 (GFNA…HGVL), 32–52 (ISLL…ITDM), 56–76 (VVGG…NVVM), and 120–140 (PSFM…LTIL). Residue Ser60 is the Nucleophile of the active site. His125 is an active-site residue.

The protein belongs to the peptidase S54 family.

It localises to the membrane. It catalyses the reaction Cleaves type-1 transmembrane domains using a catalytic dyad composed of serine and histidine that are contributed by different transmembrane domains.. May be involved in regulated intramembrane proteolysis and the subsequent release of functional polypeptides from their membrane anchors. The protein is Rhomboid-related protein 1 (Rhbdl1) of Rattus norvegicus (Rat).